We begin with the raw amino-acid sequence, 110 residues long: Evasin P1166 (110 aa).

Residues 1-24 (MEVKIFTLLQIALFIALGIHLVVA) form the signal peptide. Cystine bridges form between cysteine 45-cysteine 67, cysteine 49-cysteine 69, and cysteine 60-cysteine 80. The N-linked (GlcNAc...) asparagine glycan is linked to asparagine 48. A disordered region spans residues 89 to 110 (SEYPNPKSSEIDAAAPLPRETH).

The protein localises to the secreted. Its function is as follows. Salivary chemokine-binding protein which binds to host chemokines CXCL1, CXCL2 and CXCL8. The protein is Evasin P1166 of Ixodes ricinus (Common tick).